Consider the following 302-residue polypeptide: Putative gluconeogenesis factor (302 aa).

The protein belongs to the gluconeogenesis factor family.

It is found in the cytoplasm. Required for morphogenesis under gluconeogenic growth conditions. The sequence is that of Putative gluconeogenesis factor (ybhK) from Escherichia coli O157:H7.